The sequence spans 152 residues: UPF0735 ACT domain-containing protein CTC_00116 (152 aa).

Residues 76–151 enclose the ACT domain; that stretch reads IISVTLNHRP…NVIKLDLIAM (76 aa).

The protein belongs to the UPF0735 family.

The polypeptide is UPF0735 ACT domain-containing protein CTC_00116 (Clostridium tetani (strain Massachusetts / E88)).